The sequence spans 141 residues: Large ribosomal subunit protein uL11 (141 aa).

The protein belongs to the universal ribosomal protein uL11 family. In terms of assembly, part of the ribosomal stalk of the 50S ribosomal subunit. Interacts with L10 and the large rRNA to form the base of the stalk. L10 forms an elongated spine to which L12 dimers bind in a sequential fashion forming a multimeric L10(L12)X complex. In terms of processing, one or more lysine residues are methylated.

Functionally, forms part of the ribosomal stalk which helps the ribosome interact with GTP-bound translation factors. This chain is Large ribosomal subunit protein uL11, found in Coprothermobacter proteolyticus (strain ATCC 35245 / DSM 5265 / OCM 4 / BT).